A 156-amino-acid chain; its full sequence is 6,7-dimethyl-8-ribityllumazine synthase (156 aa).

Residues Phe23, 57–59 (AYE), and 81–83 (AVI) contribute to the 5-amino-6-(D-ribitylamino)uracil site. 86-87 (ST) contacts (2S)-2-hydroxy-3-oxobutyl phosphate. His89 acts as the Proton donor in catalysis. Phe114 is a binding site for 5-amino-6-(D-ribitylamino)uracil. Arg128 is a binding site for (2S)-2-hydroxy-3-oxobutyl phosphate.

This sequence belongs to the DMRL synthase family.

It carries out the reaction (2S)-2-hydroxy-3-oxobutyl phosphate + 5-amino-6-(D-ribitylamino)uracil = 6,7-dimethyl-8-(1-D-ribityl)lumazine + phosphate + 2 H2O + H(+). It participates in cofactor biosynthesis; riboflavin biosynthesis; riboflavin from 2-hydroxy-3-oxobutyl phosphate and 5-amino-6-(D-ribitylamino)uracil: step 1/2. Catalyzes the formation of 6,7-dimethyl-8-ribityllumazine by condensation of 5-amino-6-(D-ribitylamino)uracil with 3,4-dihydroxy-2-butanone 4-phosphate. This is the penultimate step in the biosynthesis of riboflavin. This chain is 6,7-dimethyl-8-ribityllumazine synthase, found in Helicobacter hepaticus (strain ATCC 51449 / 3B1).